A 236-amino-acid polypeptide reads, in one-letter code: Cyclin-P3-1 (236 aa).

Belongs to the cyclin family. Cyclin U/P subfamily.

In Oryza sativa subsp. japonica (Rice), this protein is Cyclin-P3-1 (CYCP3-1).